Consider the following 520-residue polypeptide: Cobalt-zinc-cadmium resistance protein CzcB (520 aa).

A helical membrane pass occupies residues 9 to 29 (AAIAAIVLVGGVATGGVLLSG). Residues 28–85 (SGRSAPEEQGGHSESKGHGDTEHHGKQAAEADHKDDKSHGDGEHHEVKKGPNGGALFS) are disordered. Residues 32–76 (APEEQGGHSESKGHGDTEHHGKQAAEADHKDDKSHGDGEHHEVKK) show a composition bias toward basic and acidic residues. Residues 286 to 320 (EQKISAEQDYLSARNALQEAQISVQNAQQKLTAIG) adopt a coiled-coil conformation.

Belongs to the membrane fusion protein (MFP) (TC 8.A.1) family.

The protein localises to the cell inner membrane. In terms of biological role, czcA and CzcB together would act in zinc efflux nearly as effectively as the complete czc efflux system (CzcABC). The CzcB protein is thought to funnel zinc cations to the CzcA transport protein. The polypeptide is Cobalt-zinc-cadmium resistance protein CzcB (czcB) (Cupriavidus metallidurans (strain ATCC 43123 / DSM 2839 / NBRC 102507 / CH34) (Ralstonia metallidurans)).